The chain runs to 296 residues: 5,10-methylenetetrahydrofolate reductase (296 aa).

The active-site Proton donor/acceptor is the Glu-28. Thr-59 serves as a coordination point for NADH. Positions 60, 62, 88, 118, 119, 120, 132, 152, 156, 159, 165, 168, 171, and 172 each coordinate FAD. Residue Asp-120 coordinates (6S)-5-methyl-5,6,7,8-tetrahydrofolate. Position 183 (Gln-183) interacts with NADH. Residues Gln-183, Gln-219, and Arg-279 each coordinate (6S)-5-methyl-5,6,7,8-tetrahydrofolate.

It belongs to the methylenetetrahydrofolate reductase family. Homotetramer. FAD serves as cofactor.

It catalyses the reaction (6S)-5-methyl-5,6,7,8-tetrahydrofolate + NAD(+) = (6R)-5,10-methylene-5,6,7,8-tetrahydrofolate + NADH + H(+). Its pathway is one-carbon metabolism; tetrahydrofolate interconversion. It participates in amino-acid biosynthesis; L-methionine biosynthesis via de novo pathway. Its function is as follows. Catalyzes the NADH-dependent reduction of 5,10-methylenetetrahydrofolate to 5-methyltetrahydrofolate. Is required to provide the methyl group necessary for methionine synthetase to convert homocysteine to methionine; the methyl group is given by 5-methyltetrahydrofolate. Can also use NADPH as the reductant, but much less effectively than NADH. The sequence is that of 5,10-methylenetetrahydrofolate reductase from Escherichia coli (strain K12).